The following is a 341-amino-acid chain: S-adenosylmethionine:tRNA ribosyltransferase-isomerase (341 aa).

This sequence belongs to the QueA family. Monomer.

It localises to the cytoplasm. It carries out the reaction 7-aminomethyl-7-carbaguanosine(34) in tRNA + S-adenosyl-L-methionine = epoxyqueuosine(34) in tRNA + adenine + L-methionine + 2 H(+). It functions in the pathway tRNA modification; tRNA-queuosine biosynthesis. In terms of biological role, transfers and isomerizes the ribose moiety from AdoMet to the 7-aminomethyl group of 7-deazaguanine (preQ1-tRNA) to give epoxyqueuosine (oQ-tRNA). This is S-adenosylmethionine:tRNA ribosyltransferase-isomerase from Clostridium botulinum (strain Langeland / NCTC 10281 / Type F).